A 284-amino-acid chain; its full sequence is ATP phosphoribosyltransferase (284 aa).

This sequence belongs to the ATP phosphoribosyltransferase family. Long subfamily. It depends on Mg(2+) as a cofactor.

The protein localises to the cytoplasm. The catalysed reaction is 1-(5-phospho-beta-D-ribosyl)-ATP + diphosphate = 5-phospho-alpha-D-ribose 1-diphosphate + ATP. It participates in amino-acid biosynthesis; L-histidine biosynthesis; L-histidine from 5-phospho-alpha-D-ribose 1-diphosphate: step 1/9. With respect to regulation, feedback inhibited by histidine. Its function is as follows. Catalyzes the condensation of ATP and 5-phosphoribose 1-diphosphate to form N'-(5'-phosphoribosyl)-ATP (PR-ATP). Has a crucial role in the pathway because the rate of histidine biosynthesis seems to be controlled primarily by regulation of HisG enzymatic activity. The protein is ATP phosphoribosyltransferase of Pseudarthrobacter chlorophenolicus (strain ATCC 700700 / DSM 12829 / CIP 107037 / JCM 12360 / KCTC 9906 / NCIMB 13794 / A6) (Arthrobacter chlorophenolicus).